A 71-amino-acid chain; its full sequence is Light-harvesting protein B-800/850 alpha chain (71 aa).

Residues 1–15 are Cytoplasmic-facing; that stretch reads MNQGKVWRVVKPTVG. A helical membrane pass occupies residues 16 to 36; it reads VPVYLGAVAVTALILHGGLLA. H31 is an a bacteriochlorophyll binding site. Residues 37–50 lie on the Periplasmic side of the membrane; that stretch reads KTDWFGAYWNGGKK. A helical membrane pass occupies residues 51–71; it reads AAAAAAAVAPAPVAAPQAPAQ.

This sequence belongs to the antenna complex alpha subunit family. An alpha/beta heterodimer conjugated to 3 bacteriochlorophyll molecules. The core complex is formed by different alpha and beta chains, binding bacteriochlorophyll molecules, and arranged most probably in tetrameric structures disposed around the reaction center. The non-pigmented gamma chains may constitute additional components.

It localises to the cell membrane. Antenna complexes are light-harvesting systems, which transfer the excitation energy to the reaction centers. This is Light-harvesting protein B-800/850 alpha chain (pucA) from Rubrivivax gelatinosus (Rhodocyclus gelatinosus).